Reading from the N-terminus, the 413-residue chain is Arginine biosynthesis bifunctional protein ArgJ, mitochondrial (413 aa).

Thr168, Lys194, Thr205, and Glu292 together coordinate substrate. Thr205 (nucleophile) is an active-site residue.

It belongs to the ArgJ family. In terms of assembly, heterodimer of an alpha and a beta chain. The alpha and beta chains are autoproteolytically processed from a single precursor protein within the mitochondrion.

It localises to the mitochondrion matrix. It catalyses the reaction N(2)-acetyl-L-ornithine + L-glutamate = N-acetyl-L-glutamate + L-ornithine. The enzyme catalyses L-glutamate + acetyl-CoA = N-acetyl-L-glutamate + CoA + H(+). It participates in amino-acid biosynthesis; L-arginine biosynthesis; L-ornithine and N-acetyl-L-glutamate from L-glutamate and N(2)-acetyl-L-ornithine (cyclic): step 1/1. It functions in the pathway amino-acid biosynthesis; L-arginine biosynthesis; N(2)-acetyl-L-ornithine from L-glutamate: step 1/4. Its function is as follows. Catalyzes two activities which are involved in the cyclic version of arginine biosynthesis: the synthesis of acetylglutamate from glutamate and acetyl-CoA, and of ornithine by transacetylation between acetylornithine and glutamate. The protein is Arginine biosynthesis bifunctional protein ArgJ, mitochondrial of Clavispora lusitaniae (strain ATCC 42720) (Yeast).